Reading from the N-terminus, the 605-residue chain is LysM domain receptor-like kinase 10 (605 aa).

The first 20 residues, M1–A20, serve as a signal peptide directing secretion. Topologically, residues A21–A245 are extracellular. Disulfide bonds link C26–C89, C30–C161, and C87–C159. Residue N44 is glycosylated (N-linked (GlcNAc...) asparagine). Residues G115–A121 and P142–G148 each bind chitin. N-linked (GlcNAc...) asparagine glycans are attached at residues N154 and N158. One can recognise a LysM domain in the interval L174–P221. A glycan (N-linked (GlcNAc...) asparagine) is linked at N226. A helical transmembrane segment spans residues I246–M266. Topologically, residues F267–F605 are cytoplasmic. S278 is subject to Phosphoserine. Residues F317–L591 form the Protein kinase domain. ATP-binding positions include I323 to V331 and K344. D436 functions as the Proton acceptor in the catalytic mechanism.

This sequence belongs to the protein kinase superfamily. Ser/Thr protein kinase family.

It is found in the cell membrane. It catalyses the reaction L-seryl-[protein] + ATP = O-phospho-L-seryl-[protein] + ADP + H(+). It carries out the reaction L-threonyl-[protein] + ATP = O-phospho-L-threonyl-[protein] + ADP + H(+). The sequence is that of LysM domain receptor-like kinase 10 from Oryza sativa subsp. japonica (Rice).